The chain runs to 430 residues: tRNA(Ile)-lysidine synthase (430 aa).

Residue 21–26 (SGGLDS) coordinates ATP.

This sequence belongs to the tRNA(Ile)-lysidine synthase family.

Its subcellular location is the cytoplasm. It carries out the reaction cytidine(34) in tRNA(Ile2) + L-lysine + ATP = lysidine(34) in tRNA(Ile2) + AMP + diphosphate + H(+). Ligates lysine onto the cytidine present at position 34 of the AUA codon-specific tRNA(Ile) that contains the anticodon CAU, in an ATP-dependent manner. Cytidine is converted to lysidine, thus changing the amino acid specificity of the tRNA from methionine to isoleucine. The protein is tRNA(Ile)-lysidine synthase of Salmonella typhimurium (strain LT2 / SGSC1412 / ATCC 700720).